We begin with the raw amino-acid sequence, 1045 residues long: Septation initiation network scaffold protein cdc11 (1045 aa).

A compositionally biased stretch (basic and acidic residues) spans 1–11 (MEQLWLEHDLS). Disordered stretches follow at residues 1–269 (MEQL…NTKD) and 282–329 (RGRM…PSLS). Over residues 18 to 39 (PQEQGSDNSSEPPTTSNVNNTQ) the composition is skewed to polar residues. 3 stretches are compositionally biased toward low complexity: residues 40–52 (STGR…STEH), 96–132 (KQSP…NVSN), and 152–165 (ISSS…SEGS). A compositionally biased stretch (polar residues) spans 166–176 (LKSQQSNTRSN). Positions 187 to 201 (ASNASSSSSVVSSPS) are enriched in low complexity. Polar residues-rich tracts occupy residues 226–238 (NQLT…NSFE) and 320–329 (DSSNAFPSLS). S360 is modified (phosphoserine). The disordered stretch occupies residues 377-417 (DVGSSQSSSKTARLNSSPKSTLKTSSVKTRRSHSAQSSRKV). Over residues 379 to 403 (GSSQSSSKTARLNSSPKSTLKTSSV) the composition is skewed to polar residues. Residue S558 is modified to Phosphoserine. LRR repeat units follow at residues 604 to 625 (RIIQ…SELC), 627 to 646 (SIEE…GCPV), 647 to 668 (TIRD…SNLL), 669 to 690 (NLQY…SSLI), 691 to 712 (HLRE…QHLD), 713 to 734 (GLLK…NSNL), 736 to 757 (RLEE…SSLQ), 758 to 779 (NLMV…QPMI), 780 to 801 (HLRI…QFPH), 802 to 822 (LRTL…RRLK), 846 to 867 (DIRN…HMFL), 868 to 889 (GVRY…IATS), 892 to 913 (NLRV…KPLQ), 914 to 935 (MIHR…CDIL), and 940 to 962 (QLNV…IDDS). The LRRCT domain maps to 1005–1043 (AWRTRRKMYAEAILLACPHLEWLDGSDVSQSSRAAFTKS).

In terms of assembly, interacts with sid4. When hyperphosphorylated, interacts with byr4. Also interacts with spg1, sid2, cdc13 and cdc16. In terms of processing, phosphorylated by cdc7 and cdk1. Hyperphosphorylated during anaphase. Dephosphorylated by par1.

It localises to the cytoplasm. The protein localises to the cytoskeleton. Its subcellular location is the microtubule organizing center. The protein resides in the spindle pole body. In terms of biological role, essential for the onset of septum formation. Involved in the organization of astral microtubules during mitosis. Acts as a bridge between sid4 and the other SIN proteins mediating their association with the spindle pole body (SPB). The sid4-cdc11 complex organizes a signaling hub on the SPB which coordinates cell and nuclear division. The sequence is that of Septation initiation network scaffold protein cdc11 (cdc11) from Schizosaccharomyces pombe (strain 972 / ATCC 24843) (Fission yeast).